The sequence spans 612 residues: Dihydroxy-acid dehydratase (612 aa).

Aspartate 81 is a binding site for Mg(2+). Position 122 (cysteine 122) interacts with [2Fe-2S] cluster. 2 residues coordinate Mg(2+): aspartate 123 and lysine 124. An N6-carboxylysine modification is found at lysine 124. Position 195 (cysteine 195) interacts with [2Fe-2S] cluster. Glutamate 492 lines the Mg(2+) pocket. The Proton acceptor role is filled by serine 518.

Belongs to the IlvD/Edd family. Homodimer. [2Fe-2S] cluster is required as a cofactor. Requires Mg(2+) as cofactor.

The enzyme catalyses (2R)-2,3-dihydroxy-3-methylbutanoate = 3-methyl-2-oxobutanoate + H2O. It catalyses the reaction (2R,3R)-2,3-dihydroxy-3-methylpentanoate = (S)-3-methyl-2-oxopentanoate + H2O. It functions in the pathway amino-acid biosynthesis; L-isoleucine biosynthesis; L-isoleucine from 2-oxobutanoate: step 3/4. The protein operates within amino-acid biosynthesis; L-valine biosynthesis; L-valine from pyruvate: step 3/4. Its function is as follows. Functions in the biosynthesis of branched-chain amino acids. Catalyzes the dehydration of (2R,3R)-2,3-dihydroxy-3-methylpentanoate (2,3-dihydroxy-3-methylvalerate) into 2-oxo-3-methylpentanoate (2-oxo-3-methylvalerate) and of (2R)-2,3-dihydroxy-3-methylbutanoate (2,3-dihydroxyisovalerate) into 2-oxo-3-methylbutanoate (2-oxoisovalerate), the penultimate precursor to L-isoleucine and L-valine, respectively. The chain is Dihydroxy-acid dehydratase from Kocuria rhizophila (strain ATCC 9341 / DSM 348 / NBRC 103217 / DC2201).